Consider the following 618-residue polypeptide: Grainyhead-like protein 1 homolog (618 aa).

The interval 1–91 (MTQEYDNKRP…EVEHPEPDHS (91 aa)) is transcription activation. Residues 74-92 (RRSSTAKPEVEHPEPDHSK) show a composition bias toward basic and acidic residues. The disordered stretch occupies residues 74–94 (RRSSTAKPEVEHPEPDHSKRN). T208 carries the post-translational modification Phosphothreonine. A Grh/CP2 DB domain is found at 248-474 (SGNNFEYTLE…DLDTQPVLFI (227 aa)). 2 interaction with DNA regions span residues 380–389 (TDFSSQKGVK) and 427–430 (RKIR).

This sequence belongs to the grh/CP2 family. Grainyhead subfamily. In terms of assembly, binds DNA as homodimer. Homodimer, also forms heterodimers with GRHL2 or GRHL3. In terms of processing, methylation at Arg-9 and Lys-116 may be involved in regulating transcriptional activation. Isoform 1 is highly expressed in brain, pancreas, tonsil, placenta and kidney. Isoform 2 is highly expressed in brain and liver. Expressed at very low levels in non-steroidogenic cells.

It is found in the nucleus. Transcription factor involved in epithelial development. Binds directly to the consensus DNA sequence 5'-AACCGGTT-3'. Important regulator of DSG1 in the context of hair anchorage and epidermal differentiation, participates in the maintenance of the skin barrier. There is no genetic interaction with GRHL3, nor functional cooperativity due to diverse target gene selectivity during epithelia development. May play a role in regulating glucose homeostasis and insulin signaling. Functionally, functions as a transcription activator. In terms of biological role, may function as a repressor in tissues where both isoform 1 and isoform 2 are expressed. The polypeptide is Grainyhead-like protein 1 homolog (Homo sapiens (Human)).